Consider the following 125-residue polypeptide: Large ribosomal subunit protein mL51 (125 aa).

Residues 1-29 (MWSVQQLLWGCRSLLTQGCRSFSLGSRDL) constitute a mitochondrion transit peptide.

It belongs to the mitochondrion-specific ribosomal protein mL51 family. Component of the mitochondrial ribosome large subunit (39S) which comprises a 16S rRNA and about 50 distinct proteins.

It localises to the mitochondrion. This chain is Large ribosomal subunit protein mL51 (mrpl51), found in Xenopus tropicalis (Western clawed frog).